A 227-amino-acid polypeptide reads, in one-letter code: Venom allergen 5.01 (227 aa).

The N-terminal stretch at 1–23 is a signal peptide; sequence MEIGGLVYLILIITIINLSFGET. 4 cysteine pairs are disulfide-bonded: Cys-27/Cys-39, Cys-31/Cys-124, Cys-49/Cys-117, and Cys-193/Cys-210. One can recognise an SCP domain in the interval 68 to 212; it reads LKRHNDFRQN…WYTHYLVCNY (145 aa).

This sequence belongs to the CRISP family. Venom allergen 5-like subfamily. Expressed by the venom gland.

The protein localises to the secreted. The sequence is that of Venom allergen 5.01 from Dolichovespula maculata (Bald-faced hornet).